The chain runs to 763 residues: Phosphoglycerol transferase I (763 aa).

4 helical membrane passes run leucine 4–tryptophan 19, tryptophan 26–serine 48, tyrosine 76–leucine 98, and tyrosine 110–threonine 132.

This sequence belongs to the OpgB family.

The protein resides in the cell inner membrane. The enzyme catalyses a phosphatidylglycerol + a membrane-derived-oligosaccharide D-glucose = a 1,2-diacyl-sn-glycerol + a membrane-derived-oligosaccharide 6-(glycerophospho)-D-glucose.. It participates in glycan metabolism; osmoregulated periplasmic glucan (OPG) biosynthesis. Its function is as follows. Transfers a phosphoglycerol residue from phosphatidylglycerol to the membrane-bound nascent glucan backbones. This chain is Phosphoglycerol transferase I, found in Salmonella typhi.